A 230-amino-acid chain; its full sequence is Cytochrome c oxidase subunit 2 (230 aa).

The Mitochondrial intermembrane segment spans residues 1–14 (MAHPTQLGFQDAAS). The helical transmembrane segment at 15 to 45 (PVMEELLHFHDHALMIVFLISTLVLYIIIAM) threads the bilayer. Topologically, residues 46–59 (VSTKLTNKYILDSQ) are mitochondrial matrix. The helical transmembrane segment at 60-87 (EIEIVWTILPAVILVLIALPSLRILYLM) threads the bilayer. At 88–230 (DEINDPHLTI…NWSSLMLEDA (143 aa)) the chain is on the mitochondrial intermembrane side. Cu cation is bound by residues H161, C196, E198, C200, H204, and M207. Mg(2+) is bound at residue E198.

This sequence belongs to the cytochrome c oxidase subunit 2 family. Component of the cytochrome c oxidase (complex IV, CIV), a multisubunit enzyme composed of 14 subunits. The complex is composed of a catalytic core of 3 subunits MT-CO1, MT-CO2 and MT-CO3, encoded in the mitochondrial DNA, and 11 supernumerary subunits COX4I, COX5A, COX5B, COX6A, COX6B, COX6C, COX7A, COX7B, COX7C, COX8 and NDUFA4, which are encoded in the nuclear genome. The complex exists as a monomer or a dimer and forms supercomplexes (SCs) in the inner mitochondrial membrane with NADH-ubiquinone oxidoreductase (complex I, CI) and ubiquinol-cytochrome c oxidoreductase (cytochrome b-c1 complex, complex III, CIII), resulting in different assemblies (supercomplex SCI(1)III(2)IV(1) and megacomplex MCI(2)III(2)IV(2)). Found in a complex with TMEM177, COA6, COX18, COX20, SCO1 and SCO2. Interacts with TMEM177 in a COX20-dependent manner. Interacts with COX20. Interacts with COX16. Cu cation is required as a cofactor.

The protein localises to the mitochondrion inner membrane. The enzyme catalyses 4 Fe(II)-[cytochrome c] + O2 + 8 H(+)(in) = 4 Fe(III)-[cytochrome c] + 2 H2O + 4 H(+)(out). Functionally, component of the cytochrome c oxidase, the last enzyme in the mitochondrial electron transport chain which drives oxidative phosphorylation. The respiratory chain contains 3 multisubunit complexes succinate dehydrogenase (complex II, CII), ubiquinol-cytochrome c oxidoreductase (cytochrome b-c1 complex, complex III, CIII) and cytochrome c oxidase (complex IV, CIV), that cooperate to transfer electrons derived from NADH and succinate to molecular oxygen, creating an electrochemical gradient over the inner membrane that drives transmembrane transport and the ATP synthase. Cytochrome c oxidase is the component of the respiratory chain that catalyzes the reduction of oxygen to water. Electrons originating from reduced cytochrome c in the intermembrane space (IMS) are transferred via the dinuclear copper A center (CU(A)) of subunit 2 and heme A of subunit 1 to the active site in subunit 1, a binuclear center (BNC) formed by heme A3 and copper B (CU(B)). The BNC reduces molecular oxygen to 2 water molecules using 4 electrons from cytochrome c in the IMS and 4 protons from the mitochondrial matrix. The sequence is that of Cytochrome c oxidase subunit 2 (mt-co2) from Carassius auratus (Goldfish).